The chain runs to 305 residues: Probable G-protein coupled receptor 141 (305 aa).

The Extracellular segment spans residues 1–22 (MPGHNTSRNSSCDPIVTPHLIS). N-linked (GlcNAc...) asparagine glycans are attached at residues N5 and N9. The chain crosses the membrane as a helical span at residues 23 to 43 (LYFIVLIGGLVGVISILFLLV). Residues 44-50 (KMNTRSV) lie on the Cytoplasmic side of the membrane. A helical transmembrane segment spans residues 51–71 (TTMAVINLVVVHSVFLLTVPF). Over 72–89 (RLTYLIKKTWMFGLPFCK) the chain is Extracellular. A helical membrane pass occupies residues 90–110 (FVSAMLHIHMYLTFLFYVVIL). Residues 111–131 (VTRYLIFFKCKDKVEFYRKLH) lie on the Cytoplasmic side of the membrane. Residues 132–152 (AVAASAGMWTLVIVIVVPLVV) form a helical membrane-spanning segment. Residues 153-183 (SRYGIHEEYNEEHCFKFHKELAYTYVKIINY) lie on the Extracellular side of the membrane. A helical membrane pass occupies residues 184–204 (MIVIFVIAVAVILLVFQVFII). Residues 205 to 227 (MLMVQKLRHSLLSHQEFWAQLKN) lie on the Cytoplasmic side of the membrane. A helical transmembrane segment spans residues 228–248 (LFFIGVILVCFLPYQFFRIYY). Topologically, residues 249–267 (LNVVTHSNACNSKVAFYNE) are extracellular. Residues 268-288 (IFLSVTAISCYDLLLFVFGGS) traverse the membrane as a helical segment. Residues 289–305 (HWFKQKIIGLWNCVLCR) are Cytoplasmic-facing.

The protein belongs to the G-protein coupled receptor 1 family.

Its subcellular location is the cell membrane. In terms of biological role, orphan receptor. This is Probable G-protein coupled receptor 141 (GPR141) from Homo sapiens (Human).